Reading from the N-terminus, the 408-residue chain is Protein trichome birefringence-like 14 (408 aa).

The helical; Signal-anchor for type II membrane protein transmembrane segment at 11-31 threads the bilayer; the sequence is GSVSLALIVLILLVIILLVSE. A GDS motif motif is present at residues 131–133; that stretch reads GDS. Residues 387–401 carry the DCXHWCLPGXXDXWN motif motif; sequence DCLHWCLPGIPDTWN.

The protein belongs to the PC-esterase family. TBL subfamily.

The protein localises to the membrane. In terms of biological role, may act as a bridging protein that binds pectin and other cell wall polysaccharides. Probably involved in maintaining esterification of pectins. May be involved in the specific O-acetylation of cell wall polymers. This chain is Protein trichome birefringence-like 14 (TBL14), found in Arabidopsis thaliana (Mouse-ear cress).